The following is a 393-amino-acid chain: MSEQLLSELSPVAATSPSPAPAAQQKLNLLDMNRQQLREFFSSMGEKPFRADQVMKWIYHYCCDDFDQMTDINKHLRARLKALAEIRAPEVAEEQRSADGTIKWAIKVGDQQVETVYIPEDDRATLCVSSQVGCALQCTFCSTAQQGFNRNLRVSEIIGQVWRAAKIIGAAKVTGQRPITNVVMMGMGEPLLNLTNVVPAMEIMLDDFGFGLSKRRVTLSTSGVVPALEKLGDMIDVALAISLHAPNDTIRDEIVPINRKYNIETFLSAVRCYLDKSNANKGRVTVEYVMLDHINDGTEHAHQLAACLKYTPCKINLIPWNPFPGAPYGRSSNSRVDRFAKVLMGYEFTTIVRKTRGDDIDAACGQLAGEVIDRTKRTLRKRMNGESIEVKAV.

A disordered region spans residues 1-22; the sequence is MSEQLLSELSPVAATSPSPAPA. The segment covering 10–22 has biased composition (low complexity); it reads SPVAATSPSPAPA. The active-site Proton acceptor is E114. In terms of domain architecture, Radical SAM core spans 120-358; it reads EDDRATLCVS…TTIVRKTRGD (239 aa). Cysteines 127 and 364 form a disulfide. Residues C134, C138, and C141 each coordinate [4Fe-4S] cluster. Residues 188–189, S220, 242–244, and N321 contribute to the S-adenosyl-L-methionine site; these read GE and SLH. The S-methylcysteine intermediate role is filled by C364.

The protein belongs to the radical SAM superfamily. RlmN family. Requires [4Fe-4S] cluster as cofactor.

The protein localises to the cytoplasm. It carries out the reaction adenosine(2503) in 23S rRNA + 2 reduced [2Fe-2S]-[ferredoxin] + 2 S-adenosyl-L-methionine = 2-methyladenosine(2503) in 23S rRNA + 5'-deoxyadenosine + L-methionine + 2 oxidized [2Fe-2S]-[ferredoxin] + S-adenosyl-L-homocysteine. The enzyme catalyses adenosine(37) in tRNA + 2 reduced [2Fe-2S]-[ferredoxin] + 2 S-adenosyl-L-methionine = 2-methyladenosine(37) in tRNA + 5'-deoxyadenosine + L-methionine + 2 oxidized [2Fe-2S]-[ferredoxin] + S-adenosyl-L-homocysteine. Its function is as follows. Specifically methylates position 2 of adenine 2503 in 23S rRNA and position 2 of adenine 37 in tRNAs. m2A2503 modification seems to play a crucial role in the proofreading step occurring at the peptidyl transferase center and thus would serve to optimize ribosomal fidelity. This is Dual-specificity RNA methyltransferase RlmN from Sodalis glossinidius (strain morsitans).